Reading from the N-terminus, the 831-residue chain is Translation initiation factor IF-2 (831 aa).

Positions 329 to 499 (TRAPVVTVMG…LLIAEMQDLK (171 aa)) constitute a tr-type G domain. A G1 region spans residues 338–345 (GHVDHGKT). Position 338-345 (338-345 (GHVDHGKT)) interacts with GTP. Positions 363–367 (GITQH) are G2. Residues 385–388 (DTPG) are G3. GTP is bound by residues 385–389 (DTPGH) and 439–442 (NKID). Residues 439–442 (NKID) form a G4 region. Residues 475 to 477 (SAL) are G5.

It belongs to the TRAFAC class translation factor GTPase superfamily. Classic translation factor GTPase family. IF-2 subfamily.

The protein localises to the cytoplasm. In terms of biological role, one of the essential components for the initiation of protein synthesis. Protects formylmethionyl-tRNA from spontaneous hydrolysis and promotes its binding to the 30S ribosomal subunits. Also involved in the hydrolysis of GTP during the formation of the 70S ribosomal complex. In Rickettsia rickettsii (strain Iowa), this protein is Translation initiation factor IF-2.